The primary structure comprises 301 residues: Glycine--tRNA ligase alpha subunit (301 aa).

The protein belongs to the class-II aminoacyl-tRNA synthetase family. As to quaternary structure, tetramer of two alpha and two beta subunits.

The protein localises to the cytoplasm. It carries out the reaction tRNA(Gly) + glycine + ATP = glycyl-tRNA(Gly) + AMP + diphosphate. This chain is Glycine--tRNA ligase alpha subunit, found in Shewanella baltica (strain OS223).